A 424-amino-acid polypeptide reads, in one-letter code: UPF0053 protein MG146 homolog (424 aa).

Positions 6 to 191 (SGGLLALIII…EQNGLFTKED (186 aa)) constitute a CNNM transmembrane domain. The next 4 membrane-spanning stretches (helical) occupy residues 7–27 (GGLL…SAVV), 71–91 (LITI…ILFL), 101–121 (AISS…LCEI), and 135–155 (LVYF…ITKL). 2 consecutive CBS domains span residues 210–270 (MIKW…NEPF) and 275–335 (LLYP…EHDE).

The protein belongs to the UPF0053 family.

It localises to the cell membrane. The protein is UPF0053 protein MG146 homolog of Mycoplasma pneumoniae (strain ATCC 29342 / M129 / Subtype 1) (Mycoplasmoides pneumoniae).